A 424-amino-acid chain; its full sequence is Histidinol dehydrogenase (424 aa).

Positions 124, 186, and 209 each coordinate NAD(+). The substrate site is built by Ser232, Gln254, and His257. Residues Gln254 and His257 each coordinate Zn(2+). Residues Glu322 and His323 each act as proton acceptor in the active site. Residues His323, Asp356, Glu410, and His415 each contribute to the substrate site. Asp356 lines the Zn(2+) pocket. Residue His415 participates in Zn(2+) binding.

Belongs to the histidinol dehydrogenase family. Requires Zn(2+) as cofactor.

It catalyses the reaction L-histidinol + 2 NAD(+) + H2O = L-histidine + 2 NADH + 3 H(+). Its pathway is amino-acid biosynthesis; L-histidine biosynthesis; L-histidine from 5-phospho-alpha-D-ribose 1-diphosphate: step 9/9. In terms of biological role, catalyzes the sequential NAD-dependent oxidations of L-histidinol to L-histidinaldehyde and then to L-histidine. The protein is Histidinol dehydrogenase of Moorella thermoacetica (strain ATCC 39073 / JCM 9320).